The sequence spans 163 residues: Nucleotide-binding protein Acel_0286 (163 aa).

It belongs to the YajQ family.

Nucleotide-binding protein. The chain is Nucleotide-binding protein Acel_0286 from Acidothermus cellulolyticus (strain ATCC 43068 / DSM 8971 / 11B).